An 876-amino-acid chain; its full sequence is Leucine--tRNA ligase (876 aa).

The 'HIGH' region signature appears at 43–53 (PYPSGRIHMGH). The short motif at 632–636 (KMSKS) is the 'KMSKS' region element. Lys-635 serves as a coordination point for ATP.

This sequence belongs to the class-I aminoacyl-tRNA synthetase family.

Its subcellular location is the cytoplasm. The enzyme catalyses tRNA(Leu) + L-leucine + ATP = L-leucyl-tRNA(Leu) + AMP + diphosphate. The chain is Leucine--tRNA ligase from Sinorhizobium medicae (strain WSM419) (Ensifer medicae).